The sequence spans 388 residues: Na(+)/H(+) antiporter NhaA (388 aa).

Helical transmembrane passes span F8–L28, L57–I77, I93–I113, G123–G143, V152–F172, S175–L195, G210–I230, I254–M274, A278–L298, L328–L348, and Y361–L381.

This sequence belongs to the NhaA Na(+)/H(+) (TC 2.A.33) antiporter family.

The protein resides in the cell inner membrane. It carries out the reaction Na(+)(in) + 2 H(+)(out) = Na(+)(out) + 2 H(+)(in). Its function is as follows. Na(+)/H(+) antiporter that extrudes sodium in exchange for external protons. The chain is Na(+)/H(+) antiporter NhaA from Zymomonas mobilis subsp. mobilis (strain ATCC 31821 / ZM4 / CP4).